We begin with the raw amino-acid sequence, 642 residues long: Threonine--tRNA ligase (642 aa).

In terms of domain architecture, TGS spans 1-61 (MPVITLPDGS…ENDAQLSIIT (61 aa)). The segment at 243–534 (DHRKIGKQLD…LTEEFAGFFP (292 aa)) is catalytic. Residue lysine 286 is modified to N6-acetyllysine. Cysteine 334, histidine 385, and histidine 511 together coordinate Zn(2+).

Belongs to the class-II aminoacyl-tRNA synthetase family. In terms of assembly, homodimer. Zn(2+) is required as a cofactor.

Its subcellular location is the cytoplasm. It catalyses the reaction tRNA(Thr) + L-threonine + ATP = L-threonyl-tRNA(Thr) + AMP + diphosphate + H(+). Its function is as follows. Catalyzes the attachment of threonine to tRNA(Thr) in a two-step reaction: L-threonine is first activated by ATP to form Thr-AMP and then transferred to the acceptor end of tRNA(Thr). Also edits incorrectly charged L-seryl-tRNA(Thr). This Escherichia coli O9:H4 (strain HS) protein is Threonine--tRNA ligase.